The sequence spans 84 residues: U4-theraphotoxin-Hhn1b (84 aa).

An N-terminal signal peptide occupies residues 1–22 (MKVTLTAILTCAAVLVLHTTAA). A propeptide spanning residues 23–47 (EELEESQLMEVGMPDTELAAVDEER) is cleaved from the precursor. Cystine bridges form between Cys-51–Cys-65, Cys-55–Cys-76, and Cys-70–Cys-81.

The protein belongs to the neurotoxin 12 (Hwtx-2) family. 02 (Hwtx-2) subfamily. As to expression, expressed by the venom gland.

The protein localises to the secreted. In terms of biological role, postsynaptic neurotoxin. The polypeptide is U4-theraphotoxin-Hhn1b (Cyriopagopus hainanus (Chinese bird spider)).